The chain runs to 91 residues: Small ribosomal subunit protein bS20 (91 aa).

The segment at 1–25 (MANTKSAEKRHRQSLKRRARNVTVR) is disordered. Positions 8–20 (EKRHRQSLKRRAR) are enriched in basic residues.

It belongs to the bacterial ribosomal protein bS20 family.

Binds directly to 16S ribosomal RNA. The sequence is that of Small ribosomal subunit protein bS20 from Myxococcus xanthus (strain DK1622).